We begin with the raw amino-acid sequence, 302 residues long: DNA-binding transcriptional activator HetR (302 aa).

The active site involves serine 153.

This sequence belongs to the peptidase S48 family. As to quaternary structure, homodimer; disulfide-linked.

Functionally, might be involved in temporal and/or spatial regulation of nitrogen fixation. Dimerization is required for DNA-binding. Has both a protease and a DNA-binding activity. The chain is DNA-binding transcriptional activator HetR from Trichodesmium erythraeum (strain IMS101).